Reading from the N-terminus, the 125-residue chain is Large ribosomal subunit protein bL12 (125 aa).

The protein belongs to the bacterial ribosomal protein bL12 family. As to quaternary structure, homodimer. Part of the ribosomal stalk of the 50S ribosomal subunit. Forms a multimeric L10(L12)X complex, where L10 forms an elongated spine to which 2 to 4 L12 dimers bind in a sequential fashion. Binds GTP-bound translation factors.

In terms of biological role, forms part of the ribosomal stalk which helps the ribosome interact with GTP-bound translation factors. Is thus essential for accurate translation. In Anaeromyxobacter dehalogenans (strain 2CP-1 / ATCC BAA-258), this protein is Large ribosomal subunit protein bL12.